A 242-amino-acid polypeptide reads, in one-letter code: Succinyl-CoA:3-ketoacid coenzyme A transferase subunit A (242 aa).

CoA is bound at residue 33-39 (GGFGLCG).

The protein belongs to the 3-oxoacid CoA-transferase subunit A family. As to quaternary structure, heterodimer of a subunit A and a subunit B.

The catalysed reaction is a 3-oxo acid + succinyl-CoA = a 3-oxoacyl-CoA + succinate. The protein operates within bacterial outer membrane biogenesis; lipopolysaccharide biosynthesis. The chain is Succinyl-CoA:3-ketoacid coenzyme A transferase subunit A (lpsI) from Xanthomonas campestris pv. campestris (strain ATCC 33913 / DSM 3586 / NCPPB 528 / LMG 568 / P 25).